A 394-amino-acid polypeptide reads, in one-letter code: Chaperone protein DnaJ (394 aa).

Positions 6 to 71 constitute a J domain; that stretch reads DYYEVLEVTK…DKRARYDQFG (66 aa). The segment at 152-234 adopts a CR-type zinc-finger fold; sequence GVEKKFKLKK…CGGEGIEYGE (83 aa). Cysteine 165, cysteine 168, cysteine 182, cysteine 185, cysteine 208, cysteine 211, cysteine 222, and cysteine 225 together coordinate Zn(2+). 4 CXXCXGXG motif repeats span residues 165-172, 182-189, 208-215, and 222-229; these read CSHCHGTG, CPTCKGSG, CPTCNGEG, and CKVCGGEG.

It belongs to the DnaJ family. Homodimer. The cofactor is Zn(2+).

It is found in the cytoplasm. In terms of biological role, participates actively in the response to hyperosmotic and heat shock by preventing the aggregation of stress-denatured proteins and by disaggregating proteins, also in an autonomous, DnaK-independent fashion. Unfolded proteins bind initially to DnaJ; upon interaction with the DnaJ-bound protein, DnaK hydrolyzes its bound ATP, resulting in the formation of a stable complex. GrpE releases ADP from DnaK; ATP binding to DnaK triggers the release of the substrate protein, thus completing the reaction cycle. Several rounds of ATP-dependent interactions between DnaJ, DnaK and GrpE are required for fully efficient folding. Also involved, together with DnaK and GrpE, in the DNA replication of plasmids through activation of initiation proteins. The sequence is that of Chaperone protein DnaJ from Bacteroides fragilis (strain YCH46).